A 670-amino-acid polypeptide reads, in one-letter code: DNA ligase (670 aa).

NAD(+)-binding positions include 32 to 36 (DAEYD), 81 to 82 (SL), and Glu113. Residue Lys115 is the N6-AMP-lysine intermediate of the active site. Arg136, Glu173, Lys290, and Lys314 together coordinate NAD(+). The Zn(2+) site is built by Cys406, Cys409, Cys424, and Cys430. The BRCT domain maps to 592–670 (EIDSPFAGKT…EQEMMRLLGE (79 aa)).

Belongs to the NAD-dependent DNA ligase family. LigA subfamily. Requires Mg(2+) as cofactor. The cofactor is Mn(2+).

It carries out the reaction NAD(+) + (deoxyribonucleotide)n-3'-hydroxyl + 5'-phospho-(deoxyribonucleotide)m = (deoxyribonucleotide)n+m + AMP + beta-nicotinamide D-nucleotide.. Its function is as follows. DNA ligase that catalyzes the formation of phosphodiester linkages between 5'-phosphoryl and 3'-hydroxyl groups in double-stranded DNA using NAD as a coenzyme and as the energy source for the reaction. It is essential for DNA replication and repair of damaged DNA. The polypeptide is DNA ligase (Erwinia tasmaniensis (strain DSM 17950 / CFBP 7177 / CIP 109463 / NCPPB 4357 / Et1/99)).